Here is a 140-residue protein sequence, read N- to C-terminus: Large ribosomal subunit protein bL17 (140 aa).

Belongs to the bacterial ribosomal protein bL17 family. Part of the 50S ribosomal subunit. Contacts protein L32.

The sequence is that of Large ribosomal subunit protein bL17 from Roseobacter denitrificans (strain ATCC 33942 / OCh 114) (Erythrobacter sp. (strain OCh 114)).